The following is a 290-amino-acid chain: Arylamine N-acetyltransferase 1 (290 aa).

Met1 carries the N-acetylmethionine modification. The active-site Acyl-thioester intermediate is Cys68. Ser103 provides a ligand contact to CoA. 106 to 107 is a substrate binding site; sequence VH. Residues His107 and Asp122 contribute to the active site. Residue Tyr208 participates in CoA binding.

Belongs to the arylamine N-acetyltransferase family.

It is found in the cytoplasm. The catalysed reaction is an arylamine + acetyl-CoA = an N-acetylarylamine + CoA. In terms of biological role, participates in the detoxification of a plethora of hydrazine and arylamine drugs. Isoniazid, 2-aminofluorene and anisidine are preferred substrates for NAT-1. No activity with p-aminobenzoic acid (PABA) nor SMZ. The polypeptide is Arylamine N-acetyltransferase 1 (Nat1) (Mus musculus (Mouse)).